A 180-amino-acid polypeptide reads, in one-letter code: Large ribosomal subunit protein uL5 (180 aa).

Belongs to the universal ribosomal protein uL5 family. In terms of assembly, part of the 50S ribosomal subunit; part of the 5S rRNA/L5/L18/L25 subcomplex. Contacts the 5S rRNA and the P site tRNA. Forms a bridge to the 30S subunit in the 70S ribosome.

Its function is as follows. This is one of the proteins that bind and probably mediate the attachment of the 5S RNA into the large ribosomal subunit, where it forms part of the central protuberance. In the 70S ribosome it contacts protein S13 of the 30S subunit (bridge B1b), connecting the 2 subunits; this bridge is implicated in subunit movement. Contacts the P site tRNA; the 5S rRNA and some of its associated proteins might help stabilize positioning of ribosome-bound tRNAs. This Streptococcus thermophilus (strain CNRZ 1066) protein is Large ribosomal subunit protein uL5.